A 473-amino-acid polypeptide reads, in one-letter code: Protein TED1 (473 aa).

Over 1-8 (MLRCAVKK) the chain is Cytoplasmic. Residues 9–29 (FAYFATFLTIVANIYIYTYPS) form a helical membrane-spanning segment. Residues 30 to 451 (FHPEQCSWNC…FSLCPFAIQH (422 aa)) lie on the Lumenal side of the membrane. N-linked (GlcNAc...) asparagine glycans are attached at residues Asn-38, Asn-147, Asn-229, Asn-266, and Asn-307. A helical transmembrane segment spans residues 452–472 (VWWFAKVSLLVTIFTWSSLLF). Position 473 (Val-473) is a topological domain, cytoplasmic.

Post-translationally, N-glycosylated.

Its subcellular location is the endoplasmic reticulum membrane. In terms of biological role, acts together with EMP24 and ERV25 in cargo exit from the endoplasmic reticulum. This is Protein TED1 (TED1) from Saccharomyces cerevisiae (strain ATCC 204508 / S288c) (Baker's yeast).